The following is an 85-amino-acid chain: UPF0335 protein WP0746 (85 aa).

It belongs to the UPF0335 family.

The polypeptide is UPF0335 protein WP0746 (Wolbachia pipientis subsp. Culex pipiens (strain wPip)).